Here is a 465-residue protein sequence, read N- to C-terminus: Iron transporter FTH1 (465 aa).

At 1 to 11 (MAFEDYFSFQI) the chain is on the vacuolar side. A helical transmembrane segment spans residues 12-32 (FFIFLRESLEIVVIVSILLTI). The Cytoplasmic segment spans residues 33–135 (VKQGLSVEDD…LYQKLKIQIL (103 aa)). A disordered region spans residues 44–66 (PFEGSSSSAGLPSPNTNTNADST). Positions 46–66 (EGSSSSAGLPSPNTNTNADST) are enriched in polar residues. A helical membrane pass occupies residues 136-156 (AGGAFGLLLCMLIGGAFVSIF). The Vacuolar portion of the chain corresponds to 157–170 (YHIGTDLWTLSEHY). A helical membrane pass occupies residues 171 to 191 (YEGVLSLVASVIISVMGLFFL). Residues 192 to 289 (RMGKLREKFR…FFFRYSSSLS (98 aa)) lie on the Cytoplasmic side of the membrane. The helical transmembrane segment at 290–310 (LKICLVVATCFLYLIAAGLFS) threads the bilayer. Residues 311 to 358 (KGVWQLELQDYVNKCNGQDMSEVGNGPGSYDISRSVWHVNCCNGEKDG) are Vacuolar-facing. Residues 359–379 (GWMIFTAIFGWTNSATVGSVI) form a helical membrane-spanning segment. Residues 380 to 465 (SYNAYWLVLI…LIIDSSGSAN (86 aa)) are Cytoplasmic-facing. Positions 433–465 (TSELNSSTSEPDSQRRSKDSSVPLIIDSSGSAN) are disordered. Residues Ser449 and Ser453 each carry the phosphoserine modification.

Belongs to the oxidase-dependent Fe transporter (OFeT) (TC 9.A.10.1) family. Interacts with FET5.

The protein resides in the vacuole membrane. In terms of biological role, high affinity iron transporter probably involved in transport of intravacuolar stores of iron. The protein is Iron transporter FTH1 (FTH1) of Saccharomyces cerevisiae (strain ATCC 204508 / S288c) (Baker's yeast).